Consider the following 388-residue polypeptide: Putative F-box protein At3g17490 (388 aa).

In terms of domain architecture, F-box spans 1–46 (MMMPHLSEDLVEEILSRVPAISLKRLRYTCKQWNALFNDQRFSKKH).

The chain is Putative F-box protein At3g17490 from Arabidopsis thaliana (Mouse-ear cress).